Consider the following 1454-residue polypeptide: MGAQLSLVVQASPSIAIFSYIDVLEEVHYVSQLNSSRFLKTCKALDPNGEIVIKVFIKPKDQYSLRPFLQRIRAQSFKLGQLPHVLNYSKLIETNRAGYMIRQHLKNNLYDRLSLRPYLQDIELKFIAFQLLNALKDIHNLNIVHGDIKTENILVTSWNWCILTDFAAFIKPVYLPEDNPGEFLFYFDTSKRRTCYLAPERFNSKLYQDGKSNNGRLTKEMDIFSLGCVIAEIFAEGRPIFNLSQLFKYKSNSYDVNREFLMEEMNSTDLRNLVLDMIQLDPSKRLSCDELLNKYRGIFFPDYFYTFIYDYFRNLVTMTTSTPISDNTCTNSTLEDNVKLLDETTEKIYRDFSQICHCLDFPLIKDGGEIGSDPPILESYKIEIEISRFLNTNLYFPQNYHLVLQQFTKVSEKIKSVKEECALLFISYLSHSIRSIVSTATKLKNLELLAVFAQFVSDENKIDRVVPYFVCCFEDSDQDVQALSLLTLIQVLTSVRKLNQLNENIFVDYLLPRLKRLLISNRQNTNYLRIVFANCLSDLAIIINRFQEFTFAQHCNDNSMDNNTEIMESSTKYSAKLIQSVEDLTVSFLTDNDTYVKMALLQNILPLCKFFGRERTNDIILSHLITYLNDKDPALRVSLIQTISGISILLGTVTLEQYILPLLIQTITDSEELVVISVLQSLKSLFKTGLIRKKYYIDISKTTSPLLLHPNNWIRQFTLMIIIEIINKLSKAEVYCILYPIIRPFFEFDVEFNFKSMISCCKQPVSRSVYNLLCSWSVRASKSLFWKKIITNHVDSFGNNRIEFITKNYSSKNYGFNKRDTKSSSSLKGIKTSSTVYSHDNKEIPLTAEDRNWIDKFHIIGLTEKDIWKIVALRGYVIRTARVMAANPDFPYNNSNYRPLVQNSPPNLNLTNIMPRNIFFDVEFAEESTSEGQDSNLENQQIYKYDESEKDSNKLNINGSKQLSTVMDINGSLIFKNKSIATTTSNLKNVFVQLEPTSYHMHSPNHGLKDNANVKPERKVVVSNSYEGDVESIEKFLSTFKILPPLRDYKEFGPIQEIVRSPNMGNLRGKLIATLMENEPNSITSSAVSPGETPYLITGSDQGVIKIWNLKEIIVGEVYSSSLTYDCSSTVTQITMIPNFDAFAVSSKDGQIIVLKVNHYQQESEVKFLNCECIRKINLKNFGKNEYAVRMRAFVNEEKSLLVALTNLSRVIIFDIRTLERLQIIENSPRHGAVSSICIDEECCVLILGTTRGIIDIWDIRFNVLIRSWSFGDHAPITHVEVCQFYGKNSVIVVGGSSKTFLTIWNFVKGHCQYAFINSDEQPSMEHFLPIEKGLEELNFCGIRSLNALSTISVSNDKILLTDEATSSIVMFSLNELSSSKAVISPSRFSDVFIPTQVTANLTMLLRKMKRTSTHSVDDSLYHHDIINSISTCEVDETPLLVACDNSGLIGIFQ.

Gly-2 is lipidated: N-myristoyl glycine. The Protein kinase domain occupies 27–300; the sequence is VHYVSQLNSS…LLNKYRGIFF (274 aa). ATP is bound by residues 33-41 and Lys-54; that span reads LNSSRFLKT. Asp-147 (proton acceptor) is an active-site residue. 4 HEAT repeats span residues 460-497, 576-613, 615-652, and 654-691; these read NKID…SVRK, KLIQ…FFGR, RTND…LLGT, and TLEQ…TGLI. WD repeat units follow at residues 1078-1118, 1126-1165, 1229-1268, 1275-1315, 1344-1382, and 1422-1454; these read NEPN…VGEV, DCSS…QESE, PRHG…LIRS, APIT…CQYA, RSLN…SSKA, and YHHD…GIFQ.

This sequence belongs to the protein kinase superfamily. Ser/Thr protein kinase family. In terms of assembly, component of the autophagy-specific VPS34 PI3-kinase complex I composed of VPS15, VPS30, VPS34, ATG14 and ATG38; and of the VPS34 PI3-kinase complex II composed of VPS15, VPS30, VPS34 and VPS38. Interacts directly with ATG14 and GPA1. Interacts directly with VPS34. In terms of processing, autophosphorylated.

The protein localises to the golgi apparatus. Its subcellular location is the trans-Golgi network membrane. The protein resides in the endosome membrane. It catalyses the reaction L-seryl-[protein] + ATP = O-phospho-L-seryl-[protein] + ADP + H(+). It carries out the reaction L-threonyl-[protein] + ATP = O-phospho-L-threonyl-[protein] + ADP + H(+). Its function is as follows. Serine/threonine-protein kinase required for cytoplasm to vacuole transport (Cvt) and autophagy as a part of the autophagy-specific VPS34 PI3-kinase complex I. This complex is essential to recruit the ATG8-phosphatidylinositol conjugate and the ATG12-ATG5 conjugate to the pre-autophagosomal structure. Is also involved in endosome-to-Golgi retrograde transport as part of the VPS34 PI3-kinase complex II. This second complex is required for the endosome-to-Golgi retrieval of PEP1 and KEX2, and the recruitment of VPS5 and VPS7, two components of the retromer complex, to endosomal membranes (probably through the synthesis of a specific pool of phosphatidylinositol 3-phosphate recruiting the retromer to the endosomes). By regulating VPS34 kinase activity, VPS15 appears to be essential for the efficient delivery of soluble hydrolases to the yeast vacuole. May function as a G protein beta subunit to propagate the pheromone response at the endosome with GPA1. This chain is Serine/threonine-protein kinase VPS15, found in Saccharomyces cerevisiae (strain ATCC 204508 / S288c) (Baker's yeast).